A 946-amino-acid chain; its full sequence is DNA primase (946 aa).

Residues 596–626 (RDTEEDEDGKEDKNNVPGNGVFQKTTSSVDT) are disordered. The segment covering 617-626 (FQKTTSSVDT) has biased composition (polar residues). The CHC2-type zinc-finger motif lies at 881 to 920 (CLNYTHRNPQETVQVFIDLRTEHSYALWASLWSRCFTKKC).

This sequence belongs to the herpesviridae DNA primase family. Associates with the helicase and the primase-associated factor to form the helicase-primase factor.

It localises to the host nucleus. Its function is as follows. Essential component of the helicase/primase complex. Unwinds the DNA at the replication forks and generates single-stranded DNA for both leading and lagging strand synthesis. The primase initiates primer synthesis and thereby produces large amount of short RNA primers on the lagging strand that the polymerase elongates using dNTPs. The protein is DNA primase (UL70) of Human cytomegalovirus (strain Merlin) (HHV-5).